We begin with the raw amino-acid sequence, 73 residues long: Putative antimicrobial peptide clone 5 (73 aa).

The first 22 residues, 1 to 22 (MQIKHLITLFFLVLIGADQCSA), serve as a signal peptide directing secretion. The propeptide occupies 45-73 (EVSPQIDQYRNFQKREAELEELLDRLPMY).

Belongs to the non-disulfide-bridged peptide (NDBP) superfamily. Short antimicrobial peptide (group 4) family. In terms of tissue distribution, expressed by the venom gland.

The protein resides in the secreted. Its function is as follows. Antibacterial peptide. The chain is Putative antimicrobial peptide clone 5 from Tityus costatus (Brazilian scorpion).